The chain runs to 53 residues: Large ribosomal subunit protein bL33A (53 aa).

The protein belongs to the bacterial ribosomal protein bL33 family.

In Mycoplasma genitalium (strain ATCC 33530 / DSM 19775 / NCTC 10195 / G37) (Mycoplasmoides genitalium), this protein is Large ribosomal subunit protein bL33A (rpmG1).